We begin with the raw amino-acid sequence, 180 residues long: Cytokinin-beta-glucosidase 1 (180 aa).

Functionally, hydrolyzes cytokinin glucosides thus liberating free cytokinins. This chain is Cytokinin-beta-glucosidase 1 (ROLC1), found in Panax ginseng (Korean ginseng).